A 203-amino-acid polypeptide reads, in one-letter code: Dephospho-CoA kinase (203 aa).

The 198-residue stretch at 6–203 folds into the DPCK domain; sequence RLGITGGIAC…SLLGRGGKGG (198 aa). 14 to 19 is an ATP binding site; it reads ACGKSV.

Belongs to the CoaE family.

The protein localises to the cytoplasm. The catalysed reaction is 3'-dephospho-CoA + ATP = ADP + CoA + H(+). Its pathway is cofactor biosynthesis; coenzyme A biosynthesis; CoA from (R)-pantothenate: step 5/5. Functionally, catalyzes the phosphorylation of the 3'-hydroxyl group of dephosphocoenzyme A to form coenzyme A. The chain is Dephospho-CoA kinase from Thermosynechococcus vestitus (strain NIES-2133 / IAM M-273 / BP-1).